A 179-amino-acid polypeptide reads, in one-letter code: Oryzines biosynthesis cluster protein J (179 aa).

A Cupin type-2 domain is found at 88–148 (YVDYHPGCEP…NHCWRNPSKT (61 aa)).

It belongs to the oryJ family.

It participates in secondary metabolite biosynthesis. Functionally, part of the gene cluster that mediates the biosynthesis of oryzines, natural products with an unusual maleidride backbone. The two subunits of the fungal fatty acid synthase oryfasA and oryfasB probably form octenoic acid. This fatty acid is most likely activated by the acyl-CoA ligase oryP to give octenyl-CoA before the citrate synthase-like protein oryE catalyzes condensation with oxaloacetate to form tricarboxylic acid. The next steps of the pathways are conjectural, but a favorite possible route has been proposed, beginning with decarboxylation and concomitant dehydration by the decarboxylase oryM, followed by tautomerization, which may lead to the production of a diene intermediate. Reduction of this diene intermediate could give the known metabolite piliformic acid. On the pathway to oryzine B and oryzine A, however, hydroxylation of the diene by the alpha-ketoglutarate-dependent dioxygenase oryG and lactonisation by the lactonohydrolases oryH or oryL could give oryzine B directly. Finally, enoyl reduction by the dehydrogenase oryD would then convert oryzine B into oryzine A. The chain is Oryzines biosynthesis cluster protein J from Aspergillus oryzae (strain ATCC 42149 / RIB 40) (Yellow koji mold).